A 291-amino-acid polypeptide reads, in one-letter code: 4-diphosphocytidyl-2-C-methyl-D-erythritol kinase (291 aa).

K10 is a catalytic residue. P94–S104 contacts ATP. D136 is an active-site residue.

Belongs to the GHMP kinase family. IspE subfamily.

It catalyses the reaction 4-CDP-2-C-methyl-D-erythritol + ATP = 4-CDP-2-C-methyl-D-erythritol 2-phosphate + ADP + H(+). It participates in isoprenoid biosynthesis; isopentenyl diphosphate biosynthesis via DXP pathway; isopentenyl diphosphate from 1-deoxy-D-xylulose 5-phosphate: step 3/6. Catalyzes the phosphorylation of the position 2 hydroxy group of 4-diphosphocytidyl-2C-methyl-D-erythritol. The chain is 4-diphosphocytidyl-2-C-methyl-D-erythritol kinase from Listeria monocytogenes serotype 4a (strain HCC23).